Consider the following 459-residue polypeptide: Bifunctional protein GlmU (459 aa).

The segment at 1 to 229 is pyrophosphorylase; the sequence is MSNYAIILAA…FDESLGVNDR (229 aa). Residues 8-11, Lys22, Gln72, and 77-78 contribute to the UDP-N-acetyl-alpha-D-glucosamine site; these read LAAG and GT. Asp102 is a binding site for Mg(2+). Residues Gly139, Glu154, Asn169, and Asn227 each coordinate UDP-N-acetyl-alpha-D-glucosamine. Asn227 is a binding site for Mg(2+). A linker region spans residues 230–250; it reads VALATAEKVMRHRIARQHMVN. The N-acetyltransferase stretch occupies residues 251–459; the sequence is GVTVVNPDSA…NKKPHHPSQK (209 aa). The UDP-N-acetyl-alpha-D-glucosamine site is built by Arg332 and Lys350. The active-site Proton acceptor is His362. UDP-N-acetyl-alpha-D-glucosamine-binding residues include Tyr365 and Asn376. Acetyl-CoA is bound by residues Ala379, 385–386, Ser404, Ala422, and Arg439; that span reads NY.

The protein in the N-terminal section; belongs to the N-acetylglucosamine-1-phosphate uridyltransferase family. This sequence in the C-terminal section; belongs to the transferase hexapeptide repeat family. In terms of assembly, homotrimer. It depends on Mg(2+) as a cofactor.

Its subcellular location is the cytoplasm. It catalyses the reaction alpha-D-glucosamine 1-phosphate + acetyl-CoA = N-acetyl-alpha-D-glucosamine 1-phosphate + CoA + H(+). The enzyme catalyses N-acetyl-alpha-D-glucosamine 1-phosphate + UTP + H(+) = UDP-N-acetyl-alpha-D-glucosamine + diphosphate. Its pathway is nucleotide-sugar biosynthesis; UDP-N-acetyl-alpha-D-glucosamine biosynthesis; N-acetyl-alpha-D-glucosamine 1-phosphate from alpha-D-glucosamine 6-phosphate (route II): step 2/2. The protein operates within nucleotide-sugar biosynthesis; UDP-N-acetyl-alpha-D-glucosamine biosynthesis; UDP-N-acetyl-alpha-D-glucosamine from N-acetyl-alpha-D-glucosamine 1-phosphate: step 1/1. It functions in the pathway bacterial outer membrane biogenesis; LPS lipid A biosynthesis. Catalyzes the last two sequential reactions in the de novo biosynthetic pathway for UDP-N-acetylglucosamine (UDP-GlcNAc). The C-terminal domain catalyzes the transfer of acetyl group from acetyl coenzyme A to glucosamine-1-phosphate (GlcN-1-P) to produce N-acetylglucosamine-1-phosphate (GlcNAc-1-P), which is converted into UDP-GlcNAc by the transfer of uridine 5-monophosphate (from uridine 5-triphosphate), a reaction catalyzed by the N-terminal domain. In Streptococcus agalactiae serotype V (strain ATCC BAA-611 / 2603 V/R), this protein is Bifunctional protein GlmU.